A 461-amino-acid chain; its full sequence is Eukaryotic translation initiation factor 3 subunit M (461 aa).

The tract at residues 42-61 (LLEPLRQQEQSDAEPDRKQR) is disordered. The region spanning 205 to 376 (DQELAQTHVV…SEFLVHRATY (172 aa)) is the PCI domain. The tract at residues 422 to 461 (AAEEAAQGKSGDKKGDRRQRRDQPQQSQPAPEAATAVAAE) is disordered. Positions 431–444 (SGDKKGDRRQRRDQ) are enriched in basic and acidic residues. The span at 445 to 461 (PQQSQPAPEAATAVAAE) shows a compositional bias: low complexity.

It belongs to the eIF-3 subunit M family. In terms of assembly, component of the eukaryotic translation initiation factor 3 (eIF-3) complex.

Its subcellular location is the cytoplasm. In terms of biological role, component of the eukaryotic translation initiation factor 3 (eIF-3) complex, which is involved in protein synthesis of a specialized repertoire of mRNAs and, together with other initiation factors, stimulates binding of mRNA and methionyl-tRNAi to the 40S ribosome. The eIF-3 complex specifically targets and initiates translation of a subset of mRNAs involved in cell proliferation. The protein is Eukaryotic translation initiation factor 3 subunit M of Aspergillus terreus (strain NIH 2624 / FGSC A1156).